Consider the following 476-residue polypeptide: Bifunctional protein HldE (476 aa).

Positions 1–319 are ribokinase; the sequence is MKVSLPAFEK…EALALHHGES (319 aa). Residue 195–198 participates in ATP binding; it reads NMSE. Asp264 is a catalytic residue. Residues 345–476 form a cytidylyltransferase region; sequence MTNGCFDILH…AIIQNIMAKQ (132 aa).

This sequence in the N-terminal section; belongs to the carbohydrate kinase PfkB family. It in the C-terminal section; belongs to the cytidylyltransferase family. Homodimer.

It carries out the reaction D-glycero-beta-D-manno-heptose 7-phosphate + ATP = D-glycero-beta-D-manno-heptose 1,7-bisphosphate + ADP + H(+). The enzyme catalyses D-glycero-beta-D-manno-heptose 1-phosphate + ATP + H(+) = ADP-D-glycero-beta-D-manno-heptose + diphosphate. The protein operates within nucleotide-sugar biosynthesis; ADP-L-glycero-beta-D-manno-heptose biosynthesis; ADP-L-glycero-beta-D-manno-heptose from D-glycero-beta-D-manno-heptose 7-phosphate: step 1/4. It functions in the pathway nucleotide-sugar biosynthesis; ADP-L-glycero-beta-D-manno-heptose biosynthesis; ADP-L-glycero-beta-D-manno-heptose from D-glycero-beta-D-manno-heptose 7-phosphate: step 3/4. Its function is as follows. Catalyzes the phosphorylation of D-glycero-D-manno-heptose 7-phosphate at the C-1 position to selectively form D-glycero-beta-D-manno-heptose-1,7-bisphosphate. Functionally, catalyzes the ADP transfer from ATP to D-glycero-beta-D-manno-heptose 1-phosphate, yielding ADP-D-glycero-beta-D-manno-heptose. The sequence is that of Bifunctional protein HldE from Shewanella sp. (strain MR-4).